The primary structure comprises 759 residues: Subtilisin-like protease SBT3.10 (759 aa).

An N-terminal signal peptide occupies residues 1–25; the sequence is MSKTIILLAFFLSIVLNVQISFVVA. A propeptide spans 26–108 (activation peptide); it reads ESKVYVVYLG…VIPNTLYEMT (83 aa). In terms of domain architecture, Inhibitor I9 spans 29-106; sequence VYVVYLGEKE…VQVIPNTLYE (78 aa). The Peptidase S8 domain occupies 112-606; it reads TWDYLGVSPG…GGLINPEKAV (495 aa). The active-site Charge relay system is the aspartate 142. 2 N-linked (GlcNAc...) asparagine glycosylation sites follow: asparagine 175 and asparagine 202. Histidine 218 acts as the Charge relay system in catalysis. Residues asparagine 233 and asparagine 361 are each glycosylated (N-linked (GlcNAc...) asparagine). Positions 390–464 constitute a PA domain; sequence DCEKLSANPK…ELGTDILFYI (75 aa). Serine 537 functions as the Charge relay system in the catalytic mechanism.

This sequence belongs to the peptidase S8 family.

It is found in the secreted. The protein is Subtilisin-like protease SBT3.10 of Arabidopsis thaliana (Mouse-ear cress).